We begin with the raw amino-acid sequence, 436 residues long: Hydrolyase ccsE (436 aa).

The active-site Nucleophile is the serine 249.

Belongs to the AB hydrolase superfamily. FUS2 hydrolase family. Homodimer.

Its pathway is mycotoxin biosynthesis. Hydrolyase; part of the gene cluster that mediates the biosynthesis of a family of the mycotoxins cytochalasins E and K. The hybrid PKS-NRPS synthetase ccsA and the enoyl reductase ccsC are responsible for fusion of phenylalanine with an octaketide backbone and subsequent release of the stable tetramic acid precursor. The polyketide synthase module (PKS) of the PKS-NRPS ccsA is responsible for the synthesis of the octaketide backbone. The downstream nonribosomal peptide synthetase (NRPS) amidates the carboxyl end of the octaketide with a phenylalanine. A reductase-like domain (R) at the C-terminus catalyzes the reductive release of the polyketide-amino acid intermediate. Because ccsA lacks a designated enoylreductase (ER) domain, the required activity is provided the enoyl reductase ccsC. Upon formation of the 11-membered carbocycle-fused perhydroisoindolone intermediate, a number of oxidative steps are required to afford the final cytochalasin E and K, including two hydroxylations at C17 and C18, one alcohol oxidation at C17, one epoxidation at C6 and C7 and two Baeyer-Villiger oxidations. The oxidative modification at C17, C18 and the C6-C7 epoxidation are likely to be catalyzed by the two cytochrome P450 oxygenases ccsD and ccsG. CcsD may be responsible for the epoxidation of the C6-C7 double bond. CcsG may be responsible for the successive oxidative modifications at C17 and C18. The double Baeyer-Villiger oxidations of ketocytochalasin to precytochalasin and cytochalasin Z(16) are among the final steps leading to cytochalasin E and K and are catalyzed by ccsB. The first oxygen insertion step follows that of the classic BVMO mechanism, generating the ester precytochalasin. Release of precytochalasin into an aqueous environment can generate the shunt product iso-precytochalasin through spontaneous isomerization. Alternatively, precytochalasin can undergo further oxidation by ccsB to yield the in-line carbonate-containing cytochalasin Z(16). Cytochalasin Z(16) is a precursor to cytochalasin E and cytochalasin K, whereas iso-precytochalasin is a precursor to cytochalasin Z(17) and rosellichalasin. The hydrolyase ccsE may catalyze hydrolysis of epoxide bond in cytochalasin E to afford cytochalasin K. The function of ccsF has not been assigned but it may play a role in post-PKS-NRPS biosynthetic step, resistance or transport of cytochalasins and related PKS-NRPS products. The sequence is that of Hydrolyase ccsE from Aspergillus clavatus (strain ATCC 1007 / CBS 513.65 / DSM 816 / NCTC 3887 / NRRL 1 / QM 1276 / 107).